A 214-amino-acid polypeptide reads, in one-letter code: Ras-like protein 2 (214 aa).

Residues 19 to 24 (GVGKSC), 35 to 41 (VDEYDPT), 65 to 66 (AG), 122 to 125 (NKCD), and 152 to 154 (SAK) each bind GTP. Positions 38–46 (YDPTIEDSY) match the Effector region motif. Positions 178 to 197 (QGYSTGSGGSNAGGPSNKME) are disordered. At Cys-211 the chain carries Cysteine methyl ester. Cys-211 carries S-farnesyl cysteine lipidation. Residues 212 to 214 (VLM) constitute a propeptide, removed in mature form.

Belongs to the small GTPase superfamily. Ras family. In terms of assembly, interacts with farnesyltransferase beta subunit RAM1.

The protein localises to the cell membrane. With respect to regulation, alternates between an inactive form bound to GDP and an active form bound to GTP. Activated by a guanine nucleotide-exchange factor (GEF) and inactivated by a GTPase-activating protein (GAP). Modulates the activity of the adenylate cyclase catalytic subunit and therefore affects the biosynthesis of cyclic-AMP. Plays a role in both surface attachment and surface recognition of appressoria, a highly specialized infection structure for plant penetration. Regulates appressorium formation by coordinated regulation of cAMP signaling and Pmk1 MAPK pathways. This is Ras-like protein 2 from Pyricularia oryzae (strain 70-15 / ATCC MYA-4617 / FGSC 8958) (Rice blast fungus).